The sequence spans 288 residues: Syntaxin PEP12 (288 aa).

The Cytoplasmic segment spans residues 1–268; that stretch reads MSEDEFFGGD…RYQKRTSRWR (268 aa). A phosphoserine mark is found at Ser-2 and Ser-23. The region spanning 195-257 is the t-SNARE coiled-coil homology domain; the sequence is QNLIEQRDQE…QLASDELRKA (63 aa). Residues 269–288 traverse the membrane as a helical; Anchor for type IV membrane protein segment; the sequence is VYLLIVLLVMLLFIFLIMKL.

The protein belongs to the syntaxin family. In terms of processing, ubiquitinated.

The protein resides in the membrane. Its function is as follows. Plays a role in the sorting and targeting of vacuolar proteases. This is Syntaxin PEP12 (PEP12) from Saccharomyces cerevisiae (strain ATCC 204508 / S288c) (Baker's yeast).